A 1320-amino-acid polypeptide reads, in one-letter code: Junctional cadherin 5-associated protein (1320 aa).

Disordered stretches follow at residues 1-124 (MYSV…GSGS), 183-202 (KKPR…KRPQ), 209-233 (YPFV…ALSP), 252-426 (GVPK…SIQY), 452-492 (DDTS…NEQS), 676-720 (ASSP…PTPT), 741-802 (NQKP…STTG), and 835-942 (ELQE…QKSQ). 2 stretches are compositionally biased toward polar residues: residues 58 to 71 (RTSL…NSEN) and 95 to 107 (NQPS…QPQS). Positions 108 to 119 (GRDDIYWSRGRQ) are enriched in basic and acidic residues. A compositionally biased stretch (pro residues) spans 255 to 267 (KVPPYPPSFPSPS). A compositionally biased stretch (basic and acidic residues) spans 308-329 (FQDHQHRDPRGSYPTRSKDPSH). Pro residues predominate over residues 338-356 (LEPPVYVPPPSYRSPPQHI). A compositionally biased stretch (polar residues) spans 369-378 (VSSNQSQQQV). The segment covering 404–415 (GSPPQGLPPQPY) has biased composition (pro residues). Polar residues predominate over residues 454-465 (TSYNPGLLTTQE). T484 carries the post-translational modification Phosphothreonine. S486 carries the phosphoserine modification. Polar residues predominate over residues 741–782 (NQKPSVPHLQGQTSLSPSRNSAFSRTSSAINQASMSKGTSDQ). Positions 849–859 (EDSEAEQPEDC) are enriched in acidic residues. Residue S851 is modified to Phosphoserine. Over residues 865–877 (KSWALQGTRTAQQ) the composition is skewed to polar residues. Phosphoserine occurs at positions 1027 and 1033. Disordered regions lie at residues 1085 to 1116 (ARRT…SLAL) and 1153 to 1174 (SDVD…KDEE). A phosphoserine mark is found at S1245 and S1248. Positions 1275–1320 (DEAWQAGHLPSVSQNENGHPEVPRDKMSDQDLWCADSYDPSRVERV) are disordered. Residues 1292-1303 (GHPEVPRDKMSD) are compositionally biased toward basic and acidic residues.

The protein resides in the cell junction. The protein localises to the adherens junction. This is Junctional cadherin 5-associated protein from Mus musculus (Mouse).